The following is a 513-amino-acid chain: Maturase K (513 aa).

The protein belongs to the intron maturase 2 family. MatK subfamily.

It is found in the plastid. Its subcellular location is the chloroplast. Functionally, usually encoded in the trnK tRNA gene intron. Probably assists in splicing its own and other chloroplast group II introns. This Saccharum officinarum (Sugarcane) protein is Maturase K.